The chain runs to 380 residues: Epoxyqueuosine reductase (380 aa).

Aspartate 134 serves as the catalytic Proton donor. The 31-residue stretch at 178–208 folds into the 4Fe-4S ferredoxin-type 1 domain; sequence FPPDKPIEDQCGGCTKCIDICPTGALIQGGQ. Cysteine 188, cysteine 191, cysteine 194, cysteine 198, cysteine 214, cysteine 240, cysteine 243, and cysteine 247 together coordinate [4Fe-4S] cluster. A 4Fe-4S ferredoxin-type 2 domain is found at 226–258; sequence PEEYRDKIGNRIYGCDTCQTVCPKNKGMDFHNH.

The protein belongs to the QueG family. As to quaternary structure, monomer. Cob(II)alamin is required as a cofactor. It depends on [4Fe-4S] cluster as a cofactor.

It localises to the cytoplasm. It carries out the reaction epoxyqueuosine(34) in tRNA + AH2 = queuosine(34) in tRNA + A + H2O. It participates in tRNA modification; tRNA-queuosine biosynthesis. Functionally, catalyzes the conversion of epoxyqueuosine (oQ) to queuosine (Q), which is a hypermodified base found in the wobble positions of tRNA(Asp), tRNA(Asn), tRNA(His) and tRNA(Tyr). The chain is Epoxyqueuosine reductase from Bacillus cereus (strain ATCC 14579 / DSM 31 / CCUG 7414 / JCM 2152 / NBRC 15305 / NCIMB 9373 / NCTC 2599 / NRRL B-3711).